The sequence spans 545 residues: Threonine--tRNA ligase catalytic subunit (545 aa).

The catalytic stretch occupies residues 139-433 (DHRLIGEKLD…LLEHFKGKLP (295 aa)). Zn(2+) contacts are provided by C231, H282, and H410.

The protein belongs to the class-II aminoacyl-tRNA synthetase family. Homodimer. Probably interacts with its editing subunit. Zn(2+) is required as a cofactor.

The protein resides in the cytoplasm. The enzyme catalyses tRNA(Thr) + L-threonine + ATP = L-threonyl-tRNA(Thr) + AMP + diphosphate + H(+). In terms of biological role, catalyzes the attachment of threonine to tRNA(Thr) in a two-step reaction: L-threonine is first activated by ATP to form Thr-AMP and then transferred to the acceptor end of tRNA(Thr). Also activates L-serine and transfers it to tRNA(Thr) but cannot deacylate incorrectly charged amino acid; unlike most archaea the editing function is found in a freestanding protein. This is Threonine--tRNA ligase catalytic subunit from Saccharolobus islandicus (strain M.16.27) (Sulfolobus islandicus).